The primary structure comprises 129 residues: Fluoride-specific ion channel FluC (129 aa).

4 helical membrane-spanning segments follow: residues 8–28 (FFCV…MVLA), 36–56 (AFPF…GLLL), 71–91 (FLGV…VEVV), and 103–123 (ALHI…AMML). Na(+) contacts are provided by Gly78 and Thr81.

Belongs to the fluoride channel Fluc/FEX (TC 1.A.43) family.

Its subcellular location is the cell inner membrane. The catalysed reaction is fluoride(in) = fluoride(out). Na(+) is not transported, but it plays an essential structural role and its presence is essential for fluoride channel function. In terms of biological role, fluoride-specific ion channel. Important for reducing fluoride concentration in the cell, thus reducing its toxicity. This chain is Fluoride-specific ion channel FluC, found in Idiomarina loihiensis (strain ATCC BAA-735 / DSM 15497 / L2-TR).